The chain runs to 108 residues: Nucleoid-associated protein GK0018 (108 aa).

The segment at 1-32 (MMRGGMGNMQKMLKQMQKMQKEMQKAQEELAE) is disordered. Over residues 9 to 18 (MQKMLKQMQK) the composition is skewed to low complexity. Basic and acidic residues predominate over residues 19–32 (MQKEMQKAQEELAE).

The protein belongs to the YbaB/EbfC family. In terms of assembly, homodimer.

The protein resides in the cytoplasm. The protein localises to the nucleoid. Functionally, binds to DNA and alters its conformation. May be involved in regulation of gene expression, nucleoid organization and DNA protection. This Geobacillus kaustophilus (strain HTA426) protein is Nucleoid-associated protein GK0018.